The sequence spans 189 residues: Peptidyl-tRNA hydrolase (189 aa).

A tRNA-binding site is contributed by Y15. H20 (proton acceptor) is an active-site residue. 3 residues coordinate tRNA: F66, N68, and N114.

The protein belongs to the PTH family. As to quaternary structure, monomer.

Its subcellular location is the cytoplasm. The enzyme catalyses an N-acyl-L-alpha-aminoacyl-tRNA + H2O = an N-acyl-L-amino acid + a tRNA + H(+). Functionally, hydrolyzes ribosome-free peptidyl-tRNAs (with 1 or more amino acids incorporated), which drop off the ribosome during protein synthesis, or as a result of ribosome stalling. Catalyzes the release of premature peptidyl moieties from peptidyl-tRNA molecules trapped in stalled 50S ribosomal subunits, and thus maintains levels of free tRNAs and 50S ribosomes. The polypeptide is Peptidyl-tRNA hydrolase (Streptococcus pyogenes serotype M1).